The sequence spans 378 residues: uncharacterized protein (378 aa).

Residues 208-317 enclose the Guanylate cyclase domain; it reads GIGFADLSSF…NPVNLAARLV (110 aa).

The protein belongs to the adenylyl cyclase class-4/guanylyl cyclase family.

This is an uncharacterized protein from Mycobacterium bovis (strain ATCC BAA-935 / AF2122/97).